Consider the following 299-residue polypeptide: MKSDNGILMSNINKPNKCYYYCIISEQWDELIYNITGGKITELRGTYVHPKLIIHIASWCNPEYAIKVSEIVLSYHAKEAIKEKEKLLQKKNDKIDELSLKIDKQNKQINKQTATMKKQTKIMKNQTNMMKDQKSTIKEQDKKINELLSKSNEVLGYAKDTNRKITHVVKERVPYSDEPKIEHQFIIMKNNDEPIKPKKGESPKKIYDYTALRIMNKSKSSTMNRYFKDHPDGETILTIDYTPNAMHLWNQCKKELIEDDKIKSSGTSSSSFNLKKGYSENKLKKDIKRIHNLRLKHPE.

The KilA-N domain maps to M1–Y75. The stretch at H76 to K150 forms a coiled coil.

The chain is Putative KilA-N domain-containing protein R879 from Acanthamoeba polyphaga mimivirus (APMV).